The following is a 275-amino-acid chain: Notch homolog 2 N-terminal-like protein B (275 aa).

The first 25 residues, 1–25 (MPALRPALLWALLALWLCCATPAHA), serve as a signal peptide directing secretion. EGF-like domains follow at residues 26 to 63 (LQCR…EYCQ), 64 to 102 (HRDP…EDCQ), 105 to 143 (TSHP…KECQ), and 144 to 180 (WTDA…QKCE). Disulfide bonds link C28-C41, C35-C51, C53-C62, C68-C79, C73-C90, C92-C101, C109-C121, C115-C131, C133-C142, C148-C159, C153-C168, C170-C179, C186-C198, C192-C207, C209-C218, C225-C236, and C230-C246. N46 is a glycosylation site (N-linked (GlcNAc...) asparagine). N155 carries N-linked (GlcNAc...) asparagine glycosylation. An EGF-like 5; calcium-binding domain is found at 182-219 (DVNECDIPGHCQHGGICLNLPGSYQCQCLQGFTGQYCD). The EGF-like 6 domain occupies 221 to 258 (LYVPCAPSPCVNGGTCRQTGDFTFECNCLPETVRRGTE).

The protein belongs to the NOTCH family. In terms of assembly, interacts with NOTCH2. Interacts with DLL1; the interaction is direct. As to expression, expressed in radial glia neural stem cells during cortical development.

The protein localises to the secreted. Human-specific protein that promotes neural progenitor proliferation and evolutionary expansion of the brain neocortex by regulating the Notch signaling pathway. Able to promote neural progenitor self-renewal, possibly by down-regulating neuronal differentiation genes, thereby delaying the differentiation of neuronal progenitors and leading to an overall final increase in neuronal production. Acts by enhancing the Notch signaling pathway via two different mechanisms that probably work in parallel to reach the same effect. Enhances Notch signaling pathway in a non-cell-autonomous manner via direct interaction with NOTCH2. Also promotes Notch signaling pathway in a cell-autonomous manner through inhibition of cis DLL1-NOTCH2 interactions, which promotes neuronal differentiation. In Homo sapiens (Human), this protein is Notch homolog 2 N-terminal-like protein B.